The following is a 405-amino-acid chain: Growth/differentiation factor 11 (405 aa).

A signal peptide spans 1-24; it reads MVLAAPLLLGFLLLALELRPRGEA. The propeptide occupies 25-296; it reads AEGPAAAAAA…VLENTKRSRR (272 aa). N-linked (GlcNAc...) asparagine glycosylation is present at Asn-92. Cystine bridges form between Cys-302-Cys-312, Cys-311-Cys-370, Cys-339-Cys-402, and Cys-343-Cys-404.

This sequence belongs to the TGF-beta family. As to quaternary structure, homodimer; disulfide-linked. Interacts directly with ACVR2B. Interacts directly with ACVR2A. Interacts with ACVR1B, TGFBR1 and ACVR1C in an ACVR2B-dependent manner. Interacts with FST isoform 2/FS288. In terms of processing, synthesized as large precursor molecule that undergoes proteolytic cleavage by furin-like proteases. This produces an inactive form consisting of the mature C-terminal portion non-covalently bound to its cleaved N-terminal propeptide. Activation of the mature form requires additional cleavage of the propeptide by a tolloid-like metalloproteinase.

The protein localises to the secreted. Functionally, secreted signal that acts globally to regulate anterior/posterior axial patterning during development. May play critical roles in patterning both mesodermal and neural tissues. It is required for proper vertebral patterning and orofacial development. Signals through activin receptors type-2, ACVR2A and ACVR2B, and activin receptors type-1, ACVR1B, ACVR1C and TGFBR1 leading to the phosphorylation of SMAD2 and SMAD3. The polypeptide is Growth/differentiation factor 11 (Gdf11) (Rattus norvegicus (Rat)).